The following is a 1275-amino-acid chain: Membrane-associated guanylate kinase, WW and PDZ domain-containing protein 2 (1275 aa).

Residues 17–101 (ESVIGRNPEG…PLRLKCVKQG (85 aa)) form the PDZ 1 domain. Residues 109 to 283 (RHYLNLRFQK…PVYSQPEELK (175 aa)) form the Guanylate kinase-like domain. The disordered stretch occupies residues 203 to 305 (LPGATPSAEG…ENEDSDPLPD (103 aa)). Residues 280 to 295 (EELKDQMDDTKPTKPE) show a composition bias toward basic and acidic residues. WW domains are found at residues 301–334 (DPLP…DPRL) and 347–380 (NELP…NPVL). Residues 301-380 (DPLPDNWEMA…RRTQFENPVL (80 aa)) are interaction with DDN. The residue at position 361 (Tyr361) is a Phosphotyrosine. PDZ domains are found at residues 425–509 (STTL…CRGY) and 604–682 (TLTI…HRGG). A Phosphoserine modification is found at Ser685. The segment at 698–740 (ENQGSPQTSLSAPAVPQNLPFPPALHRSSFPDSTEAFDPRKPD) is disordered. Residues 699-708 (NQGSPQTSLS) show a composition bias toward polar residues. The 83-residue stretch at 777 to 859 (DVHLRRMESG…NGQVNLTVRR (83 aa)) folds into the PDZ 4 domain. The residue at position 826 (Tyr826) is a Phosphotyrosine. The segment at 868–912 (CPENGRSPGSVSTHHSSPRSDYATYSNSNHAAPSSNASPPEGFAS) is disordered. A phosphoserine mark is found at Ser883 and Ser884. The span at 893-907 (SNSNHAAPSSNASPP) shows a compositional bias: low complexity. One can recognise a PDZ 5 domain in the interval 919 to 1009 (DVVIHRKENE…SVTLRIIPQE (91 aa)). Residues 1010–1040 (ELNSPTSAPSSEKQSPMAQQHSPLAQQSPLA) show a composition bias toward polar residues. The interval 1010–1128 (ELNSPTSAPS…PDTRQYPLSD (119 aa)) is disordered. Ser1013 is modified (phosphoserine). Residues 1067-1083 (NSYRSEVKARQDVKPDI) are compositionally biased toward basic and acidic residues. The PDZ 6 domain occupies 1139–1221 (TVDMEKGAKG…RVRLLLKRGT (83 aa)).

Belongs to the MAGUK family. In terms of assembly, interacts (via its WW domains) with DRPLA. Interacts (via its second PDZ domain) with PTEN (via unphosphorylated C-terminus); this interaction diminishes the degradation rate of PTEN. Interacts (via guanylate kinase domain) with DLGAP1. Interacts (via the PDZ domains) with GRIN2A, GRID2 and NLGN1. Interacts with CTNND2, CTNNB1 and MAGUIN-1. Interacts with ACVR2A, SMAD2 and SMAD3. Part of a complex consisting of MAGI2/ARIP1, ACVR2A, ACVR1B and SMAD3. May interact with HTR2A. Interacts with RAPGEF2. Identified in a complex with ACTN4, CASK, IQGAP1, NPHS1, SPTAN1 and SPTBN1. Interacts with DDN. Found in a complex, at least composed of KIDINS220, MAGI2, NTRK1 and RAPGEF2; the complex is mainly formed at late endosomes in a NGF-dependent manner. Interacts with RAPGEF2; the interaction occurs before or after nerve growth factor (NGF) stimulation. Interacts (via PDZ domain) with KIDINS220 (via C-terminal domain). Interacts with IGSF9 and HTR4. Interacts with DLL1. Found in a complex with IGSF9B and NLGN2; the interaction with IGSF9B is mediated via the PDZ 5 and PDZ 6 domains, while the interaction with NLGN2 is mediated via the WW1, WW2 and PDZ2 domains. Interacts (via PDZ 6 domain) with USH1G (via SAM domain); the interaction is triggered by phosphorylation of USH1G by CK2 and negatively regulates MAGI2-mediated endocytosis. As to expression, expressed throughout the retina except in the nuclear layers and the photoreceptor outer segments (at protein level). Highest retinal expression is observed in the outer plexiform layer, the outer limiting membrane and the inner segment of photoreceptor cells (at protein level). Expressed in brain.

The protein resides in the cytoplasm. Its subcellular location is the late endosome. It is found in the synapse. The protein localises to the synaptosome. It localises to the cell membrane. The protein resides in the cytoskeleton. Its subcellular location is the microtubule organizing center. It is found in the centrosome. The protein localises to the cell projection. It localises to the cilium. The protein resides in the centriole. Its subcellular location is the photoreceptor inner segment. It is found in the photoreceptor outer segment. In terms of biological role, seems to act as a scaffold molecule at synaptic junctions by assembling neurotransmitter receptors and cell adhesion proteins. Plays a role in nerve growth factor (NGF)-induced recruitment of RAPGEF2 to late endosomes and neurite outgrowth. May play a role in regulating activin-mediated signaling in neuronal cells. Enhances the ability of PTEN to suppress AKT1 activation. Plays a role in receptor-mediated clathrin-dependent endocytosis which is required for ciliogenesis. The sequence is that of Membrane-associated guanylate kinase, WW and PDZ domain-containing protein 2 (Magi2) from Mus musculus (Mouse).